A 138-amino-acid polypeptide reads, in one-letter code: Augmin complex subunit msd1 (138 aa).

As to quaternary structure, component of the augmin complex composed of dgt2, dgt3, dgt4, dgt5, dgt6, msd1, msd5 and wac. The complex interacts directly or indirectly with microtubules and is required for centrosome-independent generation of spindle microtubules.

Its subcellular location is the cytoplasm. The protein resides in the cytoskeleton. The protein localises to the spindle. Functionally, as part of the augmin complex, plays a role in centrosome-independent generation of spindle microtubules. The complex is required for mitotic spindle assembly through its involvement in localizing gamma-tubulin to spindle microtubules. msd1 is required for microtubule nucleation from within the mitotic spindle and for localization of Grip71 to centrosomes and mitotic spindle. This chain is Augmin complex subunit msd1, found in Drosophila melanogaster (Fruit fly).